The following is an 813-amino-acid chain: Leucine--tRNA ligase (813 aa).

Positions 39-49 (PYPSGRIHMGH) match the 'HIGH' region motif. Residues 582-586 (KMSKS) carry the 'KMSKS' region motif. Lys-585 contributes to the ATP binding site.

Belongs to the class-I aminoacyl-tRNA synthetase family.

The protein resides in the cytoplasm. It catalyses the reaction tRNA(Leu) + L-leucine + ATP = L-leucyl-tRNA(Leu) + AMP + diphosphate. In Campylobacter hominis (strain ATCC BAA-381 / DSM 21671 / CCUG 45161 / LMG 19568 / NCTC 13146 / CH001A), this protein is Leucine--tRNA ligase.